A 328-amino-acid chain; its full sequence is 5,10-methylenetetrahydromethanopterin reductase (328 aa).

It belongs to the mer family.

The protein resides in the cytoplasm. The catalysed reaction is 5-methyl-5,6,7,8-tetrahydromethanopterin + oxidized coenzyme F420-(gamma-L-Glu)(n) + H(+) = 5,10-methylenetetrahydromethanopterin + reduced coenzyme F420-(gamma-L-Glu)(n). It participates in one-carbon metabolism; methanogenesis from CO(2); methyl-coenzyme M from 5,10-methylene-5,6,7,8-tetrahydromethanopterin: step 1/2. Its function is as follows. Catalyzes the reversible reduction of methylene-H(4)MPT to methyl-H(4)MPT. This is 5,10-methylenetetrahydromethanopterin reductase from Methanosarcina barkeri (strain Fusaro / DSM 804).